A 500-amino-acid chain; its full sequence is Na(+)/H(+) antiporter NhaB (500 aa).

13 helical membrane-spanning segments follow: residues 11–31 (HGFL…FLVL), 34–54 (LLLV…EFIF), 58–78 (MALK…ALLL), 96–116 (VILL…LLLF), 129–149 (AILS…LDAL), 150–170 (TVTA…HRVA), 205–225 (LLMH…VGEP), 241–261 (FFFK…LTCV), 311–331 (ILII…LMVI), 350–370 (FQDA…VAVI), 394–414 (MLYL…VATI), 450–470 (ATPN…APLI), and 477–497 (MVWM…WAVT).

Belongs to the NhaB Na(+)/H(+) (TC 2.A.34) antiporter family.

The protein resides in the cell inner membrane. The catalysed reaction is 2 Na(+)(in) + 3 H(+)(out) = 2 Na(+)(out) + 3 H(+)(in). Its function is as follows. Na(+)/H(+) antiporter that extrudes sodium in exchange for external protons. The polypeptide is Na(+)/H(+) antiporter NhaB (Pseudomonas putida (strain GB-1)).